The following is a 212-amino-acid chain: Ras-related protein Rab-2A (212 aa).

Position 2 is an N-acetylalanine (A2). The segment at A2–K19 is required for interaction with PRKCI. G16, V17, G18, K19, S20, C21, and T38 together coordinate GTP. S20 serves as a coordination point for Mg(2+). The Switch 1 motif lies at L37–E42. The Mg(2+) site is built by T38 and D61. Positions A63–T72 match the Switch 2 motif. Positions 64, 119, 120, 122, 150, and 151 each coordinate GTP. A disordered region spans residues Q190–C212. The span at G200–C212 shows a compositional bias: gly residues. 2 S-geranylgeranyl cysteine lipidation sites follow: C211 and C212.

This sequence belongs to the small GTPase superfamily. Rab family. As to quaternary structure, interacts with PRKCI. Interacts with TRIP11. Interacts (in GTP-bound form) with GARIN1B. Interacts (GTP-bound) with HOPS complex component VPS39; interaction contributes to obtaining a functional HOPS complex that promotes autophagosome-lysosome membrane fusion driven by STX17-SNAP29-VAMP8. May interact with VPS41. Mg(2+) is required as a cofactor. Prenylated. Prenylation is required for association with cellular membranes.

Its subcellular location is the endoplasmic reticulum-Golgi intermediate compartment membrane. It is found in the melanosome. It localises to the endoplasmic reticulum membrane. The protein localises to the golgi apparatus membrane. The protein resides in the cytoplasmic vesicle. Its subcellular location is the secretory vesicle. It is found in the acrosome. It localises to the autophagosome membrane. It carries out the reaction GTP + H2O = GDP + phosphate + H(+). With respect to regulation, regulated by guanine nucleotide exchange factors (GEFs) which promote the exchange of bound GDP for free GTP, GTPase activating proteins (GAPs) which increase the GTP hydrolysis activity, and GDP dissociation inhibitors (GDIs) which inhibit the dissociation of the nucleotide from the GTPase. Functionally, the small GTPases Rab are key regulators of intracellular membrane trafficking, from the formation of transport vesicles to their fusion with membranes. Rabs cycle between active GTP-bound and inactive GDP-bound states. In their active state, drive transport of vesicular carriers from donor organelles to acceptor organelles to regulate the membrane traffic that maintains organelle identity and morphology. RAB2A regulates autophagy by promoting autophagosome-lysosome fusion via recruitment of the HOPS endosomal tethering complex; this process involves autophagosomal RAB2A and lysosomal RAB39A recruitment of HOPS subcomplexes VPS39-VPS11 and VPS41-VPS16-VPS18-VPS33A, respectively, which assemble into a functional complex to mediate membrane tethering and SNAREs-driven membrane fusion. Required for protein transport from the endoplasmic reticulum to the Golgi complex. Regulates the compacted morphology of the Golgi. Together with RAB2B, redundantly required for efficient autophagic flux. The protein is Ras-related protein Rab-2A (Rab2a) of Rattus norvegicus (Rat).